The chain runs to 456 residues: Vitamin K-dependent protein C (456 aa).

A signal peptide spans 1-20 (MWQLASLSLLLTICGTCSTA). Residues 21-42 (APPGSVFSSSESAHQVLRIRKR) constitute a propeptide that is removed on maturation. Residues 47 to 88 (LEEIRAGSLERECMEEICDFEEAKEIFQNVDDTLAYWSKYVD) enclose the Gla domain. 4-carboxyglutamate is present on residues Glu48, Glu49, Glu56, Glu58, Glu61, Glu62, Glu67, Glu68, and Glu71. Cysteines 59 and 64 form a disulfide. Intrachain disulfides connect Cys92–Cys111, Cys101–Cys106, Cys105–Cys120, and Cys122–Cys131. EGF-like domains are found at residues 97 to 132 (PEHA…RFCQ) and 136 to 176 (SYIN…LQCQ). Asp113 is subject to (3R)-3-hydroxyaspartate. An N-linked (GlcNAc...) asparagine glycan is attached at Asn139. Cystine bridges form between Cys140–Cys151, Cys147–Cys160, Cys162–Cys175, Cys183–Cys318, and Cys237–Cys253. Asn202 carries an N-linked (GlcNAc...) asparagine glycan. The 235-residue stretch at 211–445 (LVNGKVTRRG…YLDWIHSHIR (235 aa)) folds into the Peptidase S1 domain. Residue His252 is the Charge relay system of the active site. A glycan (N-linked (GlcNAc...) asparagine) is linked at Asn289. Asp298 serves as the catalytic Charge relay system. Asn350 carries an N-linked (GlcNAc...) asparagine glycan. 2 disulfides stabilise this stretch: Cys368–Cys382 and Cys393–Cys421. Ser397 functions as the Charge relay system in the catalytic mechanism.

This sequence belongs to the peptidase S1 family. In terms of assembly, synthesized as a single chain precursor, which is cleaved into a light chain and a heavy chain held together by a disulfide bond. The enzyme is then activated by thrombin, which cleaves a tetradecapeptide from the amino end of the heavy chain; this reaction, which occurs at the surface of endothelial cells, is strongly promoted by thrombomodulin. The vitamin K-dependent, enzymatic carboxylation of some Glu residues allows the modified protein to bind calcium. In terms of processing, the iron and 2-oxoglutarate dependent 3-hydroxylation of aspartate and asparagine is (R) stereospecific within EGF domains. As to expression, plasma; synthesized in the liver.

Its subcellular location is the secreted. The protein resides in the golgi apparatus. It is found in the endoplasmic reticulum. It catalyses the reaction Degradation of blood coagulation factors Va and VIIIa.. Its function is as follows. Protein C is a vitamin K-dependent serine protease that regulates blood coagulation by inactivating factors Va and VIIIa in the presence of calcium ions and phospholipids. Exerts a protective effect on the endothelial cell barrier function. This chain is Vitamin K-dependent protein C (PROC), found in Canis lupus familiaris (Dog).